The chain runs to 460 residues: Alpha-amylase (460 aa).

The first 21 residues, 1 to 21, serve as a signal peptide directing secretion; the sequence is MASRTLSGALALAAAATAVLA. Residues asparagine 121, glutamine 167, and aspartate 176 each coordinate Ca(2+). Residue aspartate 206 is the Nucleophile of the active site. Histidine 210 lines the Ca(2+) pocket. Catalysis depends on glutamate 233, which acts as the Proton donor.

This sequence belongs to the glycosyl hydrolase 13 family. As to quaternary structure, monomer. Requires Ca(2+) as cofactor.

The enzyme catalyses Endohydrolysis of (1-&gt;4)-alpha-D-glucosidic linkages in polysaccharides containing three or more (1-&gt;4)-alpha-linked D-glucose units.. The sequence is that of Alpha-amylase (amy) from Streptomyces thermoviolaceus.